Reading from the N-terminus, the 263-residue chain is tRNA (guanine-N(7)-)-methyltransferase (263 aa).

The interval 1–39 is disordered; that stretch reads MVHHGQMHAQPGVGLRPDTPVASGQLPSTSIRSRRSGIS. The S-adenosyl-L-methionine site is built by E82, D107, N136, and D159. The active site involves D159. Substrate contacts are provided by residues K163, D195, and 232-235; that span reads TKYE.

It belongs to the class I-like SAM-binding methyltransferase superfamily. TrmB family.

It catalyses the reaction guanosine(46) in tRNA + S-adenosyl-L-methionine = N(7)-methylguanosine(46) in tRNA + S-adenosyl-L-homocysteine. It functions in the pathway tRNA modification; N(7)-methylguanine-tRNA biosynthesis. Its function is as follows. Catalyzes the formation of N(7)-methylguanine at position 46 (m7G46) in tRNA. This is tRNA (guanine-N(7)-)-methyltransferase from Mycobacterium bovis (strain ATCC BAA-935 / AF2122/97).